A 254-amino-acid polypeptide reads, in one-letter code: MERKRYIFGNWKMHKTAKEAKDYLSVFCPLLEEVAPVSCVGITPAFTALHACCESIKFFHSPLWLGAQNVHQDTSGAFTGEISLPMLKEFDVNFVLLGHSECRHIFHEEDTTIALKVGAAAREGIIPVLCIGETLEVREKGATEAMLSNQLMLGLAQLPETASVIIAYEPVWAIGTGKVASAVDVQEAHAFCREVLANIFSKEKAEEISILYGGSVKADNAEGFARCPDVDGLLVGGASLDPKVFADVVANFHR.

10-12 (NWK) contributes to the substrate binding site. His-99 serves as the catalytic Electrophile. Glu-169 serves as the catalytic Proton acceptor. Residues Gly-175, Ser-215, and 236 to 237 (GG) each bind substrate.

This sequence belongs to the triosephosphate isomerase family. Homodimer.

Its subcellular location is the cytoplasm. It carries out the reaction D-glyceraldehyde 3-phosphate = dihydroxyacetone phosphate. It participates in carbohydrate biosynthesis; gluconeogenesis. Its pathway is carbohydrate degradation; glycolysis; D-glyceraldehyde 3-phosphate from glycerone phosphate: step 1/1. Functionally, involved in the gluconeogenesis. Catalyzes stereospecifically the conversion of dihydroxyacetone phosphate (DHAP) to D-glyceraldehyde-3-phosphate (G3P). This Chlamydia abortus (strain DSM 27085 / S26/3) (Chlamydophila abortus) protein is Triosephosphate isomerase.